The following is a 211-amino-acid chain: Cytochrome c biogenesis ATP-binding export protein CcmA (211 aa).

One can recognise an ABC transporter domain in the interval methionine 1–glycine 211. ATP is bound at residue glycine 33–threonine 40.

Belongs to the ABC transporter superfamily. CcmA exporter (TC 3.A.1.107) family. The complex is composed of two ATP-binding proteins (CcmA) and two transmembrane proteins (CcmB).

The protein resides in the cell inner membrane. The enzyme catalyses heme b(in) + ATP + H2O = heme b(out) + ADP + phosphate + H(+). Its function is as follows. Part of the ABC transporter complex CcmAB involved in the biogenesis of c-type cytochromes; once thought to export heme, this seems not to be the case, but its exact role is uncertain. Responsible for energy coupling to the transport system. The chain is Cytochrome c biogenesis ATP-binding export protein CcmA from Sodalis glossinidius (strain morsitans).